Here is a 690-residue protein sequence, read N- to C-terminus: DNA topoisomerase 1 (690 aa).

A Toprim domain is found at 3–121 (DYLVIVESPA…EITKQAIKDA (119 aa)). Residues E9 and D82 each contribute to the Mg(2+) site. In terms of domain architecture, Topo IA-type catalytic spans 129–558 (NMDLVDAQQA…DFYKGFEERL (430 aa)). Positions 163 to 168 (SAGRVQ) are interaction with DNA. The O-(5'-phospho-DNA)-tyrosine intermediate role is filled by Y298. Positions 329-354 (NGTKAVKKDKKSQDAHEAIRPTSVER) are disordered. Basic and acidic residues predominate over residues 339–354 (KSQDAHEAIRPTSVER). 3 C4-type zinc fingers span residues 579–605 (CEKC…FPDC), 619–647 (CPKC…YPEC), and 660–683 (CPKC…CSSC).

The protein belongs to the type IA topoisomerase family. As to quaternary structure, monomer. Mg(2+) serves as cofactor.

The catalysed reaction is ATP-independent breakage of single-stranded DNA, followed by passage and rejoining.. Releases the supercoiling and torsional tension of DNA, which is introduced during the DNA replication and transcription, by transiently cleaving and rejoining one strand of the DNA duplex. Introduces a single-strand break via transesterification at a target site in duplex DNA. The scissile phosphodiester is attacked by the catalytic tyrosine of the enzyme, resulting in the formation of a DNA-(5'-phosphotyrosyl)-enzyme intermediate and the expulsion of a 3'-OH DNA strand. The free DNA strand then undergoes passage around the unbroken strand, thus removing DNA supercoils. Finally, in the religation step, the DNA 3'-OH attacks the covalent intermediate to expel the active-site tyrosine and restore the DNA phosphodiester backbone. The protein is DNA topoisomerase 1 of Halalkalibacterium halodurans (strain ATCC BAA-125 / DSM 18197 / FERM 7344 / JCM 9153 / C-125) (Bacillus halodurans).